We begin with the raw amino-acid sequence, 1896 residues long: von Willebrand factor A domain-containing protein 8 (1896 aa).

The transit peptide at 1 to 18 directs the protein to the mitochondrion; the sequence is MHSRILFKGTAAAVAARR. 439-446 serves as a coordination point for ATP; that stretch reads GAKGCGKS. Residues 1536 to 1564 form a disordered region; the sequence is GLDVSSPKHGKIDAKNAPHVGGNQWAGGT. A VWFA domain is found at 1705 to 1887; the sequence is RLRVLADVSG…KEIPQILQQI (183 aa).

As to quaternary structure, monomer.

It is found in the mitochondrion. Exhibits ATPase activity in vitro. This chain is von Willebrand factor A domain-containing protein 8 (vwa8), found in Danio rerio (Zebrafish).